Consider the following 331-residue polypeptide: MVREKVTVSTRTLQWKCVESRVDNKRLCYGRFILSPLIKGQADTIGIAMRRALLGEIEGTCITRAKSEKIPHEYSTIVGIQESVHEILMNLKEIVLRSNLYGTRGAFICARGPGYVTAQDIISPPSVEIVDNTQHIARLMEPIDLCIGLQIERNRGYSIKRPNNFQDGSYPIDAVFMPVRNANHSIHSYGNGNERQEILFLEIWTNGSLTPKEALHEASRNLIDLFIPFLHAEEETLHLEYNQHKSTLPPLTFHDRLAKLRKNKKEIELKYIFIDQLELPPRIYNCLKRSNIHTLLDLLNKSQKDLMKIEDFRIEDVKQLLGILEKHFTID.

Residues 1 to 233 (MVREKVTVST…DLFIPFLHAE (233 aa)) form an alpha N-terminal domain (alpha-NTD) region. The interval 265–331 (KEIELKYIFI…GILEKHFTID (67 aa)) is alpha C-terminal domain (alpha-CTD).

The protein belongs to the RNA polymerase alpha chain family. In terms of assembly, in plastids the minimal PEP RNA polymerase catalytic core is composed of four subunits: alpha, beta, beta', and beta''. When a (nuclear-encoded) sigma factor is associated with the core the holoenzyme is formed, which can initiate transcription.

It is found in the plastid. Its subcellular location is the chloroplast. The catalysed reaction is RNA(n) + a ribonucleoside 5'-triphosphate = RNA(n+1) + diphosphate. In terms of biological role, DNA-dependent RNA polymerase catalyzes the transcription of DNA into RNA using the four ribonucleoside triphosphates as substrates. This Vitis vinifera (Grape) protein is DNA-directed RNA polymerase subunit alpha.